The chain runs to 386 residues: MAQIQRFFKMGSASGILLFFFALLAIIFANTSLNNFYFNFLDIPVSVQFGEFMINKTLLHWINDGFMAVFFVLVGLEVKREMLEGSLSRYQLAIFPAVAAIGGMIVPALIYYLITNQHPELSNGWAIPMATDIAFALGIVALLGTRVPLPLKVFLLALAIIDDLGAIVVIAVFFSEELSIQALSVAIVAIAGLITLNRMKVGHLCAYLIFGLILWAAVLKSGVHATLAGVIIGFCIPQKDSEGKSPLHTFEHILTPWCSFFVLPLFAFANAGVSLGTINTDMIFSTLPLGIALGLIVGKPLGVFSFSYFSVKLGIAKLPEGIKWKQVFAIAILCGIGFTMSMFLAGLAFTDGQSDSLINTLSRLGILLGSSVSAILGYLLLKSTTK.

11 helical membrane-spanning segments follow: residues 10–30, 58–78, 94–114, 124–144, 154–174, 176–196, 199–219, 253–273, 283–303, 327–347, and 361–381; these read MGSA…IFAN, LLHW…GLEV, IFPA…YYLI, GWAI…ALLG, FLLA…AVFF, EELS…LITL, MKVG…AAVL, ILTP…NAGV, IFST…PLGV, VFAI…LAGL, and LSRL…YLLL.

The protein belongs to the NhaA Na(+)/H(+) (TC 2.A.33) antiporter family.

Its subcellular location is the cell inner membrane. It catalyses the reaction Na(+)(in) + 2 H(+)(out) = Na(+)(out) + 2 H(+)(in). Na(+)/H(+) antiporter that extrudes sodium in exchange for external protons. This is Na(+)/H(+) antiporter NhaA from Mannheimia succiniciproducens (strain KCTC 0769BP / MBEL55E).